The sequence spans 634 residues: Pentatricopeptide repeat-containing protein At5g14080 (634 aa).

PPR repeat units lie at residues 81 to 115 (DSISYHSIFKSLSLSRQFSAMDALFKQVKSNKILL), 116 to 150 (DSSVYRSLIDTLVLGRKAQSAFWVLEEAFSTGQEI), 151 to 185 (HPDVCNRLLAGLTSDGCYDYAQKLFVKMRHKGVSL), 186 to 220 (NTLGFGVYIGWFCRSSETNQLLRLVDEVKKANLNI), 222 to 256 (GSIIALLILHSLCKCSREMDAFYILEELRNIDCKP), 257 to 291 (DFMAYRVIAEAFVVTGNLYERQVVLKKKRKLGVAP), 292 to 326 (RSSDYRAFILDLISAKRLTEAKEVAEVIVSGKFPM), 327 to 360 (DNDILDALIGSVSAVDPDSAVEFLVYMVSTGKLP), 361 to 395 (AIRTLSKLSKNLCRHDKSDHLIKAYELLSSKGYFS), 396 to 430 (ELQSYSLMISFLCKAGRVRESYTALQEMKKEGLAP), 431 to 465 (DVSLYNALIEACCKAEMIRPAKKLWDEMFVEGCKM), 466 to 500 (NLTTYNVLIRKLSEEGEAEESLRLFDKMLERGIEP), and 501 to 535 (DETIYMSLIEGLCKETKIEAAMEVFRKCMERDHKT).

The protein belongs to the PPR family. P subfamily.

The chain is Pentatricopeptide repeat-containing protein At5g14080 from Arabidopsis thaliana (Mouse-ear cress).